Reading from the N-terminus, the 480-residue chain is Protein nucleotidyltransferase YdiU (480 aa).

Residues glycine 86, glycine 88, arginine 89, lysine 109, aspartate 121, glycine 122, arginine 172, and arginine 179 each coordinate ATP. The Proton acceptor role is filled by aspartate 248. Residues asparagine 249 and aspartate 258 each contribute to the Mg(2+) site. Aspartate 258 serves as a coordination point for ATP.

Belongs to the SELO family. Mg(2+) is required as a cofactor. Mn(2+) serves as cofactor.

It catalyses the reaction L-seryl-[protein] + ATP = 3-O-(5'-adenylyl)-L-seryl-[protein] + diphosphate. The catalysed reaction is L-threonyl-[protein] + ATP = 3-O-(5'-adenylyl)-L-threonyl-[protein] + diphosphate. It carries out the reaction L-tyrosyl-[protein] + ATP = O-(5'-adenylyl)-L-tyrosyl-[protein] + diphosphate. The enzyme catalyses L-histidyl-[protein] + UTP = N(tele)-(5'-uridylyl)-L-histidyl-[protein] + diphosphate. It catalyses the reaction L-seryl-[protein] + UTP = O-(5'-uridylyl)-L-seryl-[protein] + diphosphate. The catalysed reaction is L-tyrosyl-[protein] + UTP = O-(5'-uridylyl)-L-tyrosyl-[protein] + diphosphate. Its function is as follows. Nucleotidyltransferase involved in the post-translational modification of proteins. It can catalyze the addition of adenosine monophosphate (AMP) or uridine monophosphate (UMP) to a protein, resulting in modifications known as AMPylation and UMPylation. This Salmonella choleraesuis (strain SC-B67) protein is Protein nucleotidyltransferase YdiU.